The primary structure comprises 25 residues: Ocellatin-P1 (25 aa).

L25 carries the leucine amide modification.

As to expression, expressed by the skin glands.

It is found in the secreted. In terms of biological role, antibacterial peptide that inhibits reference strains of both Gram-negative bacteria (E.coli, E.cloacae, K.pneumoniae, P.aeruginosa) and Gram-positive bacteria (S.aureus, S.epidermidis, E.faecalis, Streptococcus group B) with relatively low potencies (MIC=25-200 uM). The peptide shows very low hemolytic activity against human erythrocytes. Wheel projection demonstrates the amphipathicity of the alpha-helices is low which may explain the low antibacterial potency. In Leptodactylus pentadactylus (Smokey jungle frog), this protein is Ocellatin-P1.